A 158-amino-acid polypeptide reads, in one-letter code: GTP-dependent dephospho-CoA kinase (158 aa).

7 residues coordinate GTP: D35, I36, V37, D54, K56, E109, and D132.

The protein belongs to the GTP-dependent DPCK family.

It carries out the reaction 3'-dephospho-CoA + GTP = GDP + CoA + H(+). The protein operates within cofactor biosynthesis; coenzyme A biosynthesis. Functionally, catalyzes the GTP-dependent phosphorylation of the 3'-hydroxyl group of dephosphocoenzyme A to form coenzyme A (CoA). This is GTP-dependent dephospho-CoA kinase from Methanocaldococcus jannaschii (strain ATCC 43067 / DSM 2661 / JAL-1 / JCM 10045 / NBRC 100440) (Methanococcus jannaschii).